Here is a 204-residue protein sequence, read N- to C-terminus: Peptide deformylase (204 aa).

Residues Cys-131 and His-174 each contribute to the Fe cation site. The active site involves Glu-175. His-178 is a Fe cation binding site.

Belongs to the polypeptide deformylase family. The cofactor is Fe(2+).

It carries out the reaction N-terminal N-formyl-L-methionyl-[peptide] + H2O = N-terminal L-methionyl-[peptide] + formate. Removes the formyl group from the N-terminal Met of newly synthesized proteins. Requires at least a dipeptide for an efficient rate of reaction. N-terminal L-methionine is a prerequisite for activity but the enzyme has broad specificity at other positions. This is Peptide deformylase from Streptococcus thermophilus (strain CNRZ 1066).